The chain runs to 472 residues: Poly(A) polymerase catalytic subunit (472 aa).

Active-site residues include Asp191 and Asp193.

It belongs to the poxviridae poly(A) polymerase catalytic subunit family. Heterodimer of a large (catalytic) subunit and a small (regulatory) subunit.

It catalyses the reaction RNA(n) + ATP = RNA(n)-3'-adenine ribonucleotide + diphosphate. In terms of biological role, polymerase that creates the 3'-poly(A) tail of mRNA's. The polypeptide is Poly(A) polymerase catalytic subunit (PAPL) (Capra hircus (Goat)).